The primary structure comprises 239 residues: Glucosamine-6-phosphate deaminase (239 aa).

The active-site Proton acceptor; for enolization step is Asp62. Asn128 functions as the For ring-opening step in the catalytic mechanism. His130 serves as the catalytic Proton acceptor; for ring-opening step. Glu135 serves as the catalytic For ring-opening step.

Belongs to the glucosamine/galactosamine-6-phosphate isomerase family. NagB subfamily.

The enzyme catalyses alpha-D-glucosamine 6-phosphate + H2O = beta-D-fructose 6-phosphate + NH4(+). It participates in amino-sugar metabolism; N-acetylneuraminate degradation; D-fructose 6-phosphate from N-acetylneuraminate: step 5/5. Its function is as follows. Catalyzes the reversible isomerization-deamination of glucosamine 6-phosphate (GlcN6P) to form fructose 6-phosphate (Fru6P) and ammonium ion. This Lactobacillus johnsonii (strain CNCM I-12250 / La1 / NCC 533) protein is Glucosamine-6-phosphate deaminase.